Here is a 585-residue protein sequence, read N- to C-terminus: uncharacterized protein (585 aa).

It to E.coli YejM.

This is an uncharacterized protein from Haemophilus influenzae (strain ATCC 51907 / DSM 11121 / KW20 / Rd).